The chain runs to 141 residues: Hemoglobin subunit alpha-1/2 (141 aa).

In terms of domain architecture, Globin spans 1–141 (VLSPADKKNV…VSTVLTSKYR (141 aa)). A Phosphoserine modification is found at serine 3. Lysine 7 and lysine 11 each carry N6-succinyllysine. Lysine 16 carries the post-translational modification N6-acetyllysine; alternate. Lysine 16 bears the N6-succinyllysine; alternate mark. Tyrosine 24 bears the Phosphotyrosine mark. Position 35 is a phosphoserine (serine 35). Lysine 40 carries the N6-succinyllysine modification. Residue serine 49 is modified to Phosphoserine. Histidine 58 lines the O2 pocket. Heme b is bound at residue histidine 87. At serine 102 the chain carries Phosphoserine. At threonine 108 the chain carries Phosphothreonine. 2 positions are modified to phosphoserine: serine 124 and serine 131. A phosphothreonine mark is found at threonine 134 and threonine 137. Serine 138 carries the post-translational modification Phosphoserine.

Belongs to the globin family. In terms of assembly, heterotetramer of two alpha chains and two beta chains. In terms of tissue distribution, red blood cells.

Its function is as follows. Involved in oxygen transport from the lung to the various peripheral tissues. In Mandrillus sphinx (Mandrill), this protein is Hemoglobin subunit alpha-1/2.